A 463-amino-acid chain; its full sequence is Mitochondrial dynamics protein MID51 (463 aa).

Residues 1–23 (MAGAGERKGKKDDNGIGTAIDFV) lie on the Mitochondrial intermembrane side of the membrane. A helical transmembrane segment spans residues 24–46 (LSNARLVLGVGGAAMLGIATLAV). Residues 47–463 (KRMYDRAISA…LSEPEVLLQT (417 aa)) lie on the Cytoplasmic side of the membrane. A dimerization region spans residues 49 to 195 (MYDRAISAPT…LSGSLYDDLQ (147 aa)). Serine 55, serine 59, serine 79, and serine 94 each carry phosphoserine. The disordered stretch occupies residues 57–79 (PTSPTRLSHSGKRSWEEPNWMGS). Residues 104–123 (AFDTDTFCPPRPKPVARKGQ) are disordered. Positions 160–169 (AAVDICAELR) are important for interaction with DNM1L. 3 residues coordinate ADP: serine 187, serine 189, and histidine 201. The tract at residues 234–243 (RRENPEYFPR) is important for interaction with DNM1L. ADP-binding residues include serine 340, arginine 342, and lysine 368.

The protein belongs to the MID49/MID51 family. In terms of assembly, homodimer. Interacts with DNM1L.

The protein resides in the mitochondrion outer membrane. Its function is as follows. Mitochondrial outer membrane protein which regulates mitochondrial fission/fusion dynamics. Promotes the recruitment and association of the fission mediator dynamin-related protein 1 (DNM1L) to the mitochondrial surface independently of the mitochondrial fission FIS1 and MFF proteins. Regulates DNM1L GTPase activity and DNM1L oligomerization. Binds ADP and can also bind GDP, although with lower affinity. Does not bind CDP, UDP, ATP, AMP or GTP. Inhibits DNM1L GTPase activity in the absence of bound ADP. Requires ADP to stimulate DNM1L GTPase activity and the assembly of DNM1L into long, oligomeric tubules with a spiral pattern, as opposed to the ring-like DNM1L oligomers observed in the absence of bound ADP. Does not require ADP for its function in recruiting DNM1L. This Pongo abelii (Sumatran orangutan) protein is Mitochondrial dynamics protein MID51 (MIEF1).